The sequence spans 1189 residues: Pumilio homolog 1 (1189 aa).

Ser2 carries the N-acetylserine modification. Residue Ser19 is modified to Phosphoserine. The interval 22-73 (LKHHPQEPANPNMPVVLTSGTGSQAQPQPAANQALAAGTHSSPVPGSIGVAG) is disordered. The span at 45–58 (QAQPQPAANQALAA) shows a compositional bias: low complexity. A phosphoserine mark is found at Ser75, Ser98, and Ser106. Thr112 bears the Phosphothreonine mark. A phosphoserine mark is found at Ser124, Ser159, Ser197, Ser209, and Ser229. Residues 233-272 (SCLRKGGFGPRDADSDENDKGEKKNKGTFDGDKLGDLKEE) are disordered. Positions 250-272 (NDKGEKKNKGTFDGDKLGDLKEE) are enriched in basic and acidic residues. Position 305 is a phosphoserine (Ser305). Over residues 491 to 503 (QQSAPQAQQGQQQ) the composition is skewed to low complexity. Disordered regions lie at residues 491–525 (QQSA…GQQT) and 614–647 (AGTT…SSFY). The span at 512 to 525 (RPLTPNQNQQGQQT) shows a compositional bias: polar residues. Thr515 carries the phosphothreonine modification. Residues 627–647 (QQPQPQPQQQPSNNLASSSFY) are compositionally biased toward low complexity. Phosphoserine is present on residues Ser710 and Ser715. A disordered region spans residues 743–773 (GPVGMPLPSQGPGHSQTPPPSLSSHGSSSSL). A compositionally biased stretch (low complexity) spans 764–773 (LSSHGSSSSL). At Arg797 the chain carries Omega-N-methylarginine. 2 positions are modified to phosphoserine: Ser807 and Ser823. The PUM-HD domain maps to 829 to 1171 (GRSRLLEDFR…HILAKLEKYY (343 aa)). Pumilio repeat units follow at residues 849–884 (EIAG…LVFN), 885–920 (EILQ…ALAE), 921–958 (RIRG…EMVR), 959–994 (ELDG…FIID), 995–1030 (AFKG…PILE), 1031–1066 (ELHQ…KIVA), 1067–1102 (EIRG…VLID), and 1106–1145 (TMND…IVMH). An adenine-nucleotide binding in RNA target region spans residues 864-868 (SRFIQ). Residues 900–904 (NYVIQ) are uracil-nucleotide binding in RNA target. Positions 936–940 (CRVIQ) are adenine-nucleotide binding in RNA target. The segment at 974–978 (NHVVQ) is non-specific-nucleotide binding in RNA target. Residues 1010 to 1014 (CRVIQ) are adenine-nucleotide binding in RNA target. The tract at residues 1046 to 1050 (NYVIQ) is uracil-nucleotide binding in RNA target. 2 guanine-nucleotide binding in RNA target regions span residues 1082–1086 (SNVVE) and 1083–1086 (NVVE). Positions 1125–1129 (NYVVQ) are uracil-nucleotide binding in RNA target.

In terms of assembly, recruits the CCR4-POP2-NOT deadenylase leading to translational inhibition and mRNA degradation. Interacts with TRIM71 (via NHL repeats) in an RNA-dependent manner. Post-translationally, phosphorylation at Ser-715 promotes RNA-binding activity. Following growth factor stimulation phosphorylated at Ser-715, promoting binding to the 3'-UTR of CDKN1B/p27 mRNA. In terms of tissue distribution, widely expressed. Expressed in brain, heart, kidney, liver, lung, skin, intestine, spleen, testis and thymus. Weakly or not expressed in muscles and stomach. Expressed at various stages of myeloid and lymphoid cell development. Highly expressed in testis. Expressed in all major brain regions (at protein level).

Its subcellular location is the cytoplasm. It is found in the P-body. It localises to the cytoplasmic granule. In terms of biological role, sequence-specific RNA-binding protein that acts as a post-transcriptional repressor by binding the 3'-UTR of mRNA targets. Binds to an RNA consensus sequence, the Pumilio Response Element (PRE), 5'-UGUANAUA-3', that is related to the Nanos Response Element (NRE). Mediates post-transcriptional repression of transcripts via different mechanisms: acts via direct recruitment of the CCR4-POP2-NOT deadenylase leading to translational inhibition and mRNA degradation. Also mediates deadenylation-independent repression by promoting accessibility of miRNAs. Following growth factor stimulation, phosphorylated and binds to the 3'-UTR of CDKN1B/p27 mRNA, inducing a local conformational change that exposes miRNA-binding sites, promoting association of miR-221 and miR-222, efficient suppression of CDKN1B/p27 expression, and rapid entry to the cell cycle. Acts as a post-transcriptional repressor of E2F3 mRNAs by binding to its 3'-UTR and facilitating miRNA regulation. Represses a program of genes necessary to maintain genomic stability such as key mitotic, DNA repair and DNA replication factors. Its ability to repress those target mRNAs is regulated by the lncRNA NORAD (non-coding RNA activated by DNA damage) which, due to its high abundance and multitude of PUMILIO binding sites, is able to sequester a significant fraction of PUM1 and PUM2 in the cytoplasm. Involved in neuronal functions by regulating ATXN1 mRNA levels: acts by binding to the 3'-UTR of ATXN1 transcripts, leading to their down-regulation independently of the miRNA machinery. In testis, acts as a post-transcriptional regulator of spermatogenesis by binding to the 3'-UTR of mRNAs coding for regulators of p53/TP53. Involved in embryonic stem cell renewal by facilitating the exit from the ground state: acts by targeting mRNAs coding for naive pluripotency transcription factors and accelerates their down-regulation at the onset of differentiation. Binds specifically to miRNA MIR199A precursor, with PUM2, regulates miRNA MIR199A expression at a postranscriptional level. The protein is Pumilio homolog 1 of Mus musculus (Mouse).